The chain runs to 103 residues: Large ribosomal subunit protein bL21 (103 aa).

Belongs to the bacterial ribosomal protein bL21 family. Part of the 50S ribosomal subunit. Contacts protein L20.

Its function is as follows. This protein binds to 23S rRNA in the presence of protein L20. This is Large ribosomal subunit protein bL21 from Yersinia enterocolitica serotype O:8 / biotype 1B (strain NCTC 13174 / 8081).